Here is an 83-residue protein sequence, read N- to C-terminus: Putative potassium channel toxin Ts20 (83 aa).

An N-terminal signal peptide occupies residues 1–18 (MKLDIVLIMFVTFSTTLA).

In terms of processing, contains 3 disulfide bonds. In terms of tissue distribution, expressed by the venom gland.

It localises to the secreted. In terms of biological role, reversibly inhibits potassium channels. The chain is Putative potassium channel toxin Ts20 from Tityus serrulatus (Brazilian scorpion).